The sequence spans 294 residues: Secreted frizzled-related protein 2 (294 aa).

An N-terminal signal peptide occupies residues 1–24 (MPRGPGSLLLLVLASHCCLGSARG). In terms of domain architecture, FZ spans 34–154 (YKRSNCKPIP…PQDNDLCIPL (121 aa)). Cystine bridges form between Cys39–Cys102, Cys49–Cys95, Cys86–Cys124, Cys113–Cys151, Cys117–Cys141, Cys171–Cys244, Cys174–Cys246, and Cys189–Cys294. The NTR domain occupies 171 to 294 (CEACKNKNED…ISRSIRKLQC (124 aa)).

This sequence belongs to the secreted frizzled-related protein (sFRP) family.

It localises to the secreted. Functionally, soluble frizzled-related proteins (sFRPS) function as modulators of Wnt signaling through direct interaction with Wnts. They have a role in regulating cell growth and differentiation in specific cell types. SFRP2 may be important for eye retinal development and for myogenesis. The sequence is that of Secreted frizzled-related protein 2 (SFRP2) from Canis lupus familiaris (Dog).